Consider the following 463-residue polypeptide: Elongation factor 1-alpha 2 (463 aa).

Gly-2 carries the post-translational modification N,N,N-trimethylglycine. Residues 5–242 (KTHINIVVIG…DTILPPTRPT (238 aa)) form the tr-type G domain. Residues 14–21 (GHVDSGKS) are G1. GTP is bound by residues Asp-17, Ser-18, Gly-19, Lys-20, Ser-21, and Thr-22. Asp-17 provides a ligand contact to Mg(2+). An N6,N6,N6-trimethyllysine; alternate modification is found at Lys-36. An N6,N6-dimethyllysine; alternate modification is found at Lys-36. N6-methyllysine; alternate is present on Lys-36. An N6,N6,N6-trimethyllysine modification is found at Lys-55. Lys-55 is subject to N6,N6-dimethyllysine. Positions 70–74 (GITID) are G2. Lys-79 carries the post-translational modification N6,N6,N6-trimethyllysine. The G3 stretch occupies residues 91 to 94 (DAPG). Residues Asn-153, Lys-154, and Asp-156 each contribute to the GTP site. The G4 stretch occupies residues 153–156 (NKMD). Residue Ser-163 is modified to Phosphoserine. At Lys-165 the chain carries N6,N6-dimethyllysine; alternate. Residue Lys-165 is modified to N6-methyllysine; alternate. Lys-165 is modified (N6,N6,N6-trimethyllysine; alternate; by EEF1AKMT3). At Lys-179 the chain carries N6-acetyllysine. Ser-194, Gly-195, and Trp-196 together coordinate GTP. Positions 194–196 (SGW) are G5. At Ser-224 the chain carries Phosphoserine. The residue at position 239 (Thr-239) is a Phosphothreonine. Residues Glu-301 and Glu-374 each carry the 5-glutamyl glycerylphosphorylethanolamine modification. The residue at position 439 (Lys-439) is an N6-acetyllysine. A disordered region spans residues 444–463 (KSGGAGKVTKSAQKAQKAGK).

The protein belongs to the TRAFAC class translation factor GTPase superfamily. Classic translation factor GTPase family. EF-Tu/EF-1A subfamily. Homodimer; arranged in a 'head to tail' dimer configuration. Trimethylated at Lys-165 by EEF1AKMT3. Mono-, di-, and trimethylated at Lys-36 by EEF1AKMT4; trimethylated form is predominant. Methylation by EEF1AKMT4 contributes to the fine-tuning of translation rates for a subset of tRNAs. Trimethylated at the N-terminus and dimethylated at Lys-55 by METTL13.

It is found in the endoplasmic reticulum membrane. It carries out the reaction GTP + H2O = GDP + phosphate + H(+). Its function is as follows. Translation elongation factor that catalyzes the GTP-dependent binding of aminoacyl-tRNA (aa-tRNA) to the A-site of ribosomes during the elongation phase of protein synthesis. Base pairing between the mRNA codon and the aa-tRNA anticodon promotes GTP hydrolysis, releasing the aa-tRNA from EEF1A1 and allowing its accommodation into the ribosome. The growing protein chain is subsequently transferred from the P-site peptidyl tRNA to the A-site aa-tRNA, extending it by one amino acid through ribosome-catalyzed peptide bond formation. This Bos taurus (Bovine) protein is Elongation factor 1-alpha 2 (EEF1A2).